The chain runs to 846 residues: Spindle pole body component SPC98 (846 aa).

A phosphoserine mark is found at S124 and S136.

It belongs to the TUBGCP family. In terms of assembly, interacts with TUB4, SPC72 and SPC97.

The protein resides in the nucleus. It localises to the cytoplasm. The protein localises to the cytoskeleton. It is found in the microtubule organizing center. Its subcellular location is the spindle pole body. Involved in microtubule organization by the microtubule organizing center, the spindle pole body (SPB). Probably part of the microtubule attachment site at the SPB. This Saccharomyces cerevisiae (strain ATCC 204508 / S288c) (Baker's yeast) protein is Spindle pole body component SPC98 (SPC98).